Reading from the N-terminus, the 319-residue chain is 2-hydroxyisoflavanone dehydratase (319 aa).

An Involved in the stabilization of the negatively charged intermediate by the formation of the oxyanion hole motif is present at residues H77–G79. Catalysis depends on T164, which acts as the Proton acceptor. D263 is an active-site residue. Catalysis depends on H295, which acts as the Proton donor/acceptor.

Belongs to the 'GDXG' lipolytic enzyme family.

The catalysed reaction is (2R,3S)-2,4',7-trihydroxyisoflavanone = daidzein + H2O + H(+). It carries out the reaction 2-hydroxy-2,3-dihydrogenistein = genistein + H2O + H(+). It catalyses the reaction a carboxylic ester + H2O = an alcohol + a carboxylate + H(+). The protein operates within secondary metabolite biosynthesis; flavonoid biosynthesis. Dehydratase that mediates the biosynthesis of isoflavonoids. Can use both 4'-hydroxylated and 4'-methoxylated 2-hydroxyisoflavanones as substrates. Also has a slight carboxylesterase activity toward p-nitrophenyl butyrate. This is 2-hydroxyisoflavanone dehydratase (HIDH) from Glycine max (Soybean).